Reading from the N-terminus, the 455-residue chain is Ktr system potassium uptake protein B (455 aa).

The helical transmembrane segment at 27–47 (IILLSFLGVLLPSAVLLTLPV) threads the bilayer. An intramembrane segment occupies 54 to 74 (SITDALFTATSAISVTGLGVV). Transmembrane regions (helical) follow at residues 86 to 106 (ILLM…SAVL) and 141 to 161 (IVTF…YRWV). Residues 169–189 (GMFYALFHSISAFNNAGFALF) lie within the membrane without spanning it. Transmembrane regions (helical) follow at residues 201–221 (LVSF…TVIG) and 240–260 (IMLI…WLLE). The stretch at 291-313 (FNSVDLTQFTQPALLIMIVLMLI) is an intramembrane region. A run of 2 helical transmembrane segments spans residues 318–340 (TSTG…WTFL) and 362–382 (LAII…LMLT). The stretch at 390-410 (VMFETISAFATVGLTAGLTAE) is an intramembrane region. The chain crosses the membrane as a helical span at residues 418–438 (IMIVVMIIGRIGPLTLAYMLA).

Belongs to the TrkH potassium transport family. Ktr (TC 2.A.38.4) subfamily. The uptake system is composed of KtrA and KtrB.

It is found in the cell inner membrane. Its activity is regulated as follows. K(+) transport is stimulated by Na(+). Its function is as follows. Part of the Na(+)-dependent high affinity K(+) uptake system KtrAB. KtrB is the K(+)-translocating subunit. The sequence is that of Ktr system potassium uptake protein B (ktrB) from Vibrio alginolyticus.